The following is a 428-amino-acid chain: Folylpolyglutamate synthase (428 aa).

49–52 (GKGS) is a binding site for ATP. Serine 73 serves as a coordination point for Mg(2+). (6R)-5,10-methylenetetrahydrofolyl-(gamma-L-Glu)n contacts are provided by phenylalanine 75 and arginine 82. Mg(2+) contacts are provided by glutamate 143 and histidine 170. At lysine 185 the chain carries N6-carboxylysine. Residues asparagine 264, arginine 300, and 313–316 (DGAH) each bind ATP. Serine 417 lines the (6R)-5,10-methylenetetrahydrofolyl-(gamma-L-Glu)n pocket.

It belongs to the folylpolyglutamate synthase family. Monomer. Mg(2+) is required as a cofactor.

The enzyme catalyses (6S)-5,6,7,8-tetrahydrofolyl-(gamma-L-Glu)(n) + L-glutamate + ATP = (6S)-5,6,7,8-tetrahydrofolyl-(gamma-L-Glu)(n+1) + ADP + phosphate + H(+). The catalysed reaction is (6R)-5,10-methylenetetrahydrofolyl-(gamma-L-Glu)(n) + L-glutamate + ATP = (6R)-5,10-methylenetetrahydrofolyl-(gamma-L-Glu)(n+1) + ADP + phosphate + H(+). It carries out the reaction 10-formyltetrahydrofolyl-(gamma-L-Glu)(n) + L-glutamate + ATP = 10-formyltetrahydrofolyl-(gamma-L-Glu)(n+1) + ADP + phosphate + H(+). Competitively inhibited by adenosine 5'-(3-thio)triphosphate and beta,gamma-methylene-ATP. Involved in the conversion of folates to polyglutamate derivatives, and likely functions in the retention of cellular folate pools. Catalyzes successive MgATP-dependent additions of glutamate to a pteroylmonoglutamate substrate, with a high preference for 5,10-methylenetetrahydrofolate (mTHF). Thus, metabolizes mTHF to the tetraglutamate derivative, but longer glutamate chain length products are not observed. Tetrahydrofolate (H4PteGlu) and 10-formyl-H4PteGlu are poorer folate substrates. In contrast to E.coli FolC, this enzyme does not display dihydrofolate synthase activity. The polypeptide is Folylpolyglutamate synthase (Lacticaseibacillus casei (Lactobacillus casei)).